The chain runs to 253 residues: Ribonuclease HII (253 aa).

The region spanning 32–223 (APVAGLDEAG…FKTSGEEDRI (192 aa)) is the RNase H type-2 domain. Asp-38, Glu-39, and Asp-130 together coordinate a divalent metal cation.

It belongs to the RNase HII family. The cofactor is Mn(2+). Mg(2+) serves as cofactor.

Its subcellular location is the cytoplasm. The enzyme catalyses Endonucleolytic cleavage to 5'-phosphomonoester.. In terms of biological role, endonuclease that specifically degrades the RNA of RNA-DNA hybrids. In Chelativorans sp. (strain BNC1), this protein is Ribonuclease HII.